Consider the following 234-residue polypeptide: Small ribosomal subunit protein uS3 (234 aa).

The region spanning 39–109 is the KH type-2 domain; it reads IRTLINKHYG…EVRIAIYEVK (71 aa).

Belongs to the universal ribosomal protein uS3 family. In terms of assembly, part of the 30S ribosomal subunit. Forms a tight complex with proteins S10 and S14.

In terms of biological role, binds the lower part of the 30S subunit head. Binds mRNA in the 70S ribosome, positioning it for translation. The polypeptide is Small ribosomal subunit protein uS3 (Coprothermobacter proteolyticus (strain ATCC 35245 / DSM 5265 / OCM 4 / BT)).